The chain runs to 286 residues: D-tagatose-1,6-bisphosphate aldolase subunit KbaY (286 aa).

Asp82 acts as the Proton donor in catalysis. Residues His83 and His180 each contribute to the Zn(2+) site. A dihydroxyacetone phosphate-binding site is contributed by Gly181. His208 provides a ligand contact to Zn(2+). Residues 209–211 (GAS) and 230–233 (NVAT) contribute to the dihydroxyacetone phosphate site.

This sequence belongs to the class II fructose-bisphosphate aldolase family. TagBP aldolase KbaY subfamily. In terms of assembly, homotetramer. Forms a complex with KbaZ. The cofactor is Zn(2+).

The enzyme catalyses D-tagatofuranose 1,6-bisphosphate = D-glyceraldehyde 3-phosphate + dihydroxyacetone phosphate. It participates in carbohydrate metabolism; D-tagatose 6-phosphate degradation; D-glyceraldehyde 3-phosphate and glycerone phosphate from D-tagatose 6-phosphate: step 2/2. Functionally, catalytic subunit of the tagatose-1,6-bisphosphate aldolase KbaYZ, which catalyzes the reversible aldol condensation of dihydroxyacetone phosphate (DHAP or glycerone-phosphate) with glyceraldehyde 3-phosphate (G3P) to produce tagatose 1,6-bisphosphate (TBP). Requires KbaZ subunit for full activity and stability. In Escherichia coli O17:K52:H18 (strain UMN026 / ExPEC), this protein is D-tagatose-1,6-bisphosphate aldolase subunit KbaY.